A 188-amino-acid chain; its full sequence is Elongation factor P (188 aa).

This sequence belongs to the elongation factor P family.

The protein resides in the cytoplasm. It participates in protein biosynthesis; polypeptide chain elongation. Its function is as follows. Involved in peptide bond synthesis. Stimulates efficient translation and peptide-bond synthesis on native or reconstituted 70S ribosomes in vitro. Probably functions indirectly by altering the affinity of the ribosome for aminoacyl-tRNA, thus increasing their reactivity as acceptors for peptidyl transferase. The sequence is that of Elongation factor P from Rickettsia peacockii (strain Rustic).